A 427-amino-acid chain; its full sequence is Citrate synthase (427 aa).

Lys283 bears the N6-acetyllysine mark. Catalysis depends on residues His306 and Asp363.

This sequence belongs to the citrate synthase family. Homohexamer.

It catalyses the reaction oxaloacetate + acetyl-CoA + H2O = citrate + CoA + H(+). It participates in carbohydrate metabolism; tricarboxylic acid cycle; isocitrate from oxaloacetate: step 1/2. The protein is Citrate synthase (gltA) of Escherichia coli O6:H1 (strain CFT073 / ATCC 700928 / UPEC).